Consider the following 308-residue polypeptide: Acyltransferase drtE (308 aa).

In terms of domain architecture, AB hydrolase-1 spans 35-159; that stretch reads PALVMNPGYN…AAEAKDNFSR (125 aa).

Belongs to the polyketide transferase af380 family.

It functions in the pathway secondary metabolite biosynthesis; terpenoid biosynthesis. Acyltransferase; part of the gene cluster that mediates the biosynthesis of various drimane-type sesquiterpene esters, compounds that exhibit diverse biological activities and are widely present in eukaryotes. The pathway begins with the synthesis of the backbone drimenol by the terpene cyclase drtB using farnesyl pyrophosphate (FPP) as substrate. The cytochrome P450 monooxygenase drtD is then responsible for the hydroxylations at C-6, C-9 and C-12, as well as the oxidation of hydroxyl groups at C-6 and C-11 to a ketone and an aldehyde, respectively. Then, the biosynthesis can go in two directions, either the hydroxylated drimenol is further hydroxylated at C-2 and C-3 by an enzyme(s) not associated with the drt cluster, or the FAD-binding oxidoreductase drtC further oxidizes C-11 or C-12 to form the butyrolactone ring. DrtB, drtD and drtC are solely responsible for the formation of the different drimane structures observed during drimane sesquiterpenes biosynthesis. The polyketide synthase drtA synthesizes different lengths (C6 and C8) of PKS chains, which are then oxidized to varying degrees by the short-chain dehydrogenase drtF. Finally, these PKS chains are transferred onto drimane sesquiterpenes by the acyltransferase drtE, forming the sesquiterpene esters. In addition to the different fatty acyl-CoA chains produced by drtA, drtE is also able to use cinnamoyl-CoA as a substrate. The polypeptide is Acyltransferase drtE (Aspergillus calidoustus).